Here is a 293-residue protein sequence, read N- to C-terminus: Cell adhesion molecule CEACAM21 (293 aa).

An N-terminal signal peptide occupies residues 1–34 (MGPPSACPHRECIPWQGLLLTASLLTFWNAPTTA). Residues 35–240 (WLFIASAPFE…TVKSDDNTLG (206 aa)) lie on the Extracellular side of the membrane. N111 is a glycosylation site (N-linked (GlcNAc...) asparagine). The region spanning 147–231 (PSIQASSTTV…SNRSDPLKLT (85 aa)) is the Ig-like C2-type domain. The cysteines at positions 166 and 214 are disulfide-linked. The helical transmembrane segment at 241 to 261 (ILIGVLVGSLLVAALVCFLLL) threads the bilayer. At 262–293 (RKTGRASDQSDFREQQPPASTPGHGPSDSSIS) the chain is on the cytoplasmic side. Residues 267 to 293 (ASDQSDFREQQPPASTPGHGPSDSSIS) are disordered.

It belongs to the immunoglobulin superfamily. CEA family.

It localises to the membrane. This is Cell adhesion molecule CEACAM21 from Homo sapiens (Human).